Reading from the N-terminus, the 348-residue chain is Holliday junction branch migration complex subunit RuvB (348 aa).

The segment at 4–184 (ADRLIAASGR…FGIVQRLEFY (181 aa)) is large ATPase domain (RuvB-L). ATP is bound by residues Ile-23, Arg-24, Gly-65, Lys-68, Thr-69, Thr-70, 131–133 (EDF), Arg-174, Tyr-184, and Arg-221. Thr-69 serves as a coordination point for Mg(2+). Positions 185–255 (SDKDLATIVS…VADMALNLLD (71 aa)) are small ATPAse domain (RuvB-S). Residues 258-348 (ERGFDHSDRR…GGDFSEPGDE (91 aa)) form a head domain (RuvB-H) region. 3 residues coordinate DNA: Arg-294, Arg-313, and Arg-318.

It belongs to the RuvB family. In terms of assembly, homohexamer. Forms an RuvA(8)-RuvB(12)-Holliday junction (HJ) complex. HJ DNA is sandwiched between 2 RuvA tetramers; dsDNA enters through RuvA and exits via RuvB. An RuvB hexamer assembles on each DNA strand where it exits the tetramer. Each RuvB hexamer is contacted by two RuvA subunits (via domain III) on 2 adjacent RuvB subunits; this complex drives branch migration. In the full resolvosome a probable DNA-RuvA(4)-RuvB(12)-RuvC(2) complex forms which resolves the HJ.

It localises to the cytoplasm. It carries out the reaction ATP + H2O = ADP + phosphate + H(+). Its function is as follows. The RuvA-RuvB-RuvC complex processes Holliday junction (HJ) DNA during genetic recombination and DNA repair, while the RuvA-RuvB complex plays an important role in the rescue of blocked DNA replication forks via replication fork reversal (RFR). RuvA specifically binds to HJ cruciform DNA, conferring on it an open structure. The RuvB hexamer acts as an ATP-dependent pump, pulling dsDNA into and through the RuvAB complex. RuvB forms 2 homohexamers on either side of HJ DNA bound by 1 or 2 RuvA tetramers; 4 subunits per hexamer contact DNA at a time. Coordinated motions by a converter formed by DNA-disengaged RuvB subunits stimulates ATP hydrolysis and nucleotide exchange. Immobilization of the converter enables RuvB to convert the ATP-contained energy into a lever motion, pulling 2 nucleotides of DNA out of the RuvA tetramer per ATP hydrolyzed, thus driving DNA branch migration. The RuvB motors rotate together with the DNA substrate, which together with the progressing nucleotide cycle form the mechanistic basis for DNA recombination by continuous HJ branch migration. Branch migration allows RuvC to scan DNA until it finds its consensus sequence, where it cleaves and resolves cruciform DNA. The polypeptide is Holliday junction branch migration complex subunit RuvB (Pseudomonas putida (strain GB-1)).